Here is a 259-residue protein sequence, read N- to C-terminus: Phosphatidylglycerol--prolipoprotein diacylglyceryl transferase (259 aa).

4 helical membrane passes run 10–30, 50–70, 86–106, and 112–132; these read IGLL…LFAY, IISW…ILFY, WKGG…MYIF, and IKFL…IFLG. Residue Arg133 participates in a 1,2-diacyl-sn-glycero-3-phospho-(1'-sn-glycerol) binding. Helical transmembrane passes span 169-189, 197-217, and 227-247; these read LYEA…LFFF, GMLF…IEFV, and ILFN…ILGI.

It belongs to the Lgt family.

It localises to the cell inner membrane. It catalyses the reaction L-cysteinyl-[prolipoprotein] + a 1,2-diacyl-sn-glycero-3-phospho-(1'-sn-glycerol) = an S-1,2-diacyl-sn-glyceryl-L-cysteinyl-[prolipoprotein] + sn-glycerol 1-phosphate + H(+). It participates in protein modification; lipoprotein biosynthesis (diacylglyceryl transfer). Its function is as follows. Catalyzes the transfer of the diacylglyceryl group from phosphatidylglycerol to the sulfhydryl group of the N-terminal cysteine of a prolipoprotein, the first step in the formation of mature lipoproteins. The sequence is that of Phosphatidylglycerol--prolipoprotein diacylglyceryl transferase from Ehrlichia ruminantium (strain Gardel).